The primary structure comprises 462 residues: C4-dicarboxylate transport transcriptional regulatory protein DctD (462 aa).

Positions 12-126 (QVLLIDDDPH…ALLDSVRRAL (115 aa)) constitute a Response regulatory domain. Position 61 is a 4-aspartylphosphate (Asp61). The Sigma-54 factor interaction domain maps to 152-381 (LIGRSAGMQR…LQNAAERFAL (230 aa)). ATP is bound by residues 180–187 (GETGAGKE) and 243–252 (ANGGTLFLDE).

Phosphorylated by DctB.

In terms of biological role, member of the two-component regulatory system DctB/DctD, which regulates C4-dicarboxylate transport via regulation of expression of the dctPQM operon and dctA. The chain is C4-dicarboxylate transport transcriptional regulatory protein DctD from Pseudomonas aeruginosa (strain ATCC 15692 / DSM 22644 / CIP 104116 / JCM 14847 / LMG 12228 / 1C / PRS 101 / PAO1).